Here is a 119-residue protein sequence, read N- to C-terminus: Ribonuclease P protein component (119 aa).

Belongs to the RnpA family. In terms of assembly, consists of a catalytic RNA component (M1 or rnpB) and a protein subunit.

It carries out the reaction Endonucleolytic cleavage of RNA, removing 5'-extranucleotides from tRNA precursor.. In terms of biological role, RNaseP catalyzes the removal of the 5'-leader sequence from pre-tRNA to produce the mature 5'-terminus. It can also cleave other RNA substrates such as 4.5S RNA. The protein component plays an auxiliary but essential role in vivo by binding to the 5'-leader sequence and broadening the substrate specificity of the ribozyme. The chain is Ribonuclease P protein component from Streptococcus gordonii (strain Challis / ATCC 35105 / BCRC 15272 / CH1 / DL1 / V288).